A 160-amino-acid polypeptide reads, in one-letter code: MIRVGNGFDVHQLVEGRPCIIGGVEIPFAKGLKGHSDADVLLHAVSDALLGAAALGDIGKHFPDTDERFKDADSRVLLRHVVALLKAKHYNIVNIDATIIAEAPKMAPHIARMVQHIAEDCDILADCVNVKATTSEKMGFVGRGEGIAAQAVCLIQKYQI.

A divalent metal cation-binding residues include D9 and H11. 4-CDP-2-C-methyl-D-erythritol 2-phosphate-binding positions include 9 to 11 (DVH) and 35 to 36 (HS). Residue H43 coordinates a divalent metal cation. 4-CDP-2-C-methyl-D-erythritol 2-phosphate contacts are provided by residues 57 to 59 (DIG), 62 to 66 (FPDTD), 101 to 107 (AEAPKMA), 133 to 136 (TTSE), F140, and R143.

The protein belongs to the IspF family. As to quaternary structure, homotrimer. A divalent metal cation is required as a cofactor.

The catalysed reaction is 4-CDP-2-C-methyl-D-erythritol 2-phosphate = 2-C-methyl-D-erythritol 2,4-cyclic diphosphate + CMP. It participates in isoprenoid biosynthesis; isopentenyl diphosphate biosynthesis via DXP pathway; isopentenyl diphosphate from 1-deoxy-D-xylulose 5-phosphate: step 4/6. Functionally, involved in the biosynthesis of isopentenyl diphosphate (IPP) and dimethylallyl diphosphate (DMAPP), two major building blocks of isoprenoid compounds. Catalyzes the conversion of 4-diphosphocytidyl-2-C-methyl-D-erythritol 2-phosphate (CDP-ME2P) to 2-C-methyl-D-erythritol 2,4-cyclodiphosphate (ME-CPP) with a corresponding release of cytidine 5-monophosphate (CMP). In Methylobacillus flagellatus (strain ATCC 51484 / DSM 6875 / VKM B-1610 / KT), this protein is 2-C-methyl-D-erythritol 2,4-cyclodiphosphate synthase.